The sequence spans 616 residues: Dihydroxy-acid dehydratase (616 aa).

D81 serves as a coordination point for Mg(2+). [2Fe-2S] cluster is bound at residue C122. Residues D123 and K124 each contribute to the Mg(2+) site. At K124 the chain carries N6-carboxylysine. C195 contributes to the [2Fe-2S] cluster binding site. E491 is a binding site for Mg(2+). S517 functions as the Proton acceptor in the catalytic mechanism.

It belongs to the IlvD/Edd family. As to quaternary structure, homodimer. The cofactor is [2Fe-2S] cluster. Requires Mg(2+) as cofactor.

The enzyme catalyses (2R)-2,3-dihydroxy-3-methylbutanoate = 3-methyl-2-oxobutanoate + H2O. The catalysed reaction is (2R,3R)-2,3-dihydroxy-3-methylpentanoate = (S)-3-methyl-2-oxopentanoate + H2O. It functions in the pathway amino-acid biosynthesis; L-isoleucine biosynthesis; L-isoleucine from 2-oxobutanoate: step 3/4. Its pathway is amino-acid biosynthesis; L-valine biosynthesis; L-valine from pyruvate: step 3/4. Functions in the biosynthesis of branched-chain amino acids. Catalyzes the dehydration of (2R,3R)-2,3-dihydroxy-3-methylpentanoate (2,3-dihydroxy-3-methylvalerate) into 2-oxo-3-methylpentanoate (2-oxo-3-methylvalerate) and of (2R)-2,3-dihydroxy-3-methylbutanoate (2,3-dihydroxyisovalerate) into 2-oxo-3-methylbutanoate (2-oxoisovalerate), the penultimate precursor to L-isoleucine and L-valine, respectively. The protein is Dihydroxy-acid dehydratase of Yersinia pseudotuberculosis serotype O:1b (strain IP 31758).